The chain runs to 499 residues: Protein NODULATION SIGNALING PATHWAY 2 (499 aa).

Residues 64–106 (NNTGPAFSDHTASTTSEEEEEEEATTTTMTTTTTTTTTTPEAA) form a disordered region. A compositionally biased stretch (low complexity) spans 88-104 (TTTTMTTTTTTTTTTPE). In terms of domain architecture, GRAS spans 106 to 491 (ADDDFKGLRL…RRLLSASLWT (386 aa)). Positions 113-182 (LRLVHLLMAG…AGGAYNSSSK (70 aa)) are leucine repeat I (LRI). Residues 201–265 (FQLLQDMSPY…PNGPHLRITA (65 aa)) form a VHIID region. The short motif at 232–236 (VHIVD) is the VHIID element. The segment at 281-313 (ETGRRLTAFATSLGQPFSFHHSRLESDETFRPA) is leucine repeat II (LRII). Residues 323 to 414 (LVFNCMLNLP…RVFLGPRIVG (92 aa)) form a PFYRE region. An SAW region spans residues 417 to 491 (ARIYRTGGGG…RRLLSASLWT (75 aa)).

The protein belongs to the GRAS family. Interacts with IPN2. Binds to RAD1. Interacts with RAM1. As to expression, highly expressed in roots.

It localises to the nucleus membrane. Its subcellular location is the endoplasmic reticulum. Its function is as follows. Transcriptional regulator essential for Nod-factor-induced gene expression. Acts downstream of calcium spiking and a calcium/calmodulin-dependent protein kinase required for activation of early nodulation gene expression. Transcription factor involved in the induction of NIN and ENOD40 genes, which are required for rhizobial infection and early nodule development. Does not seem to contribute to the early steps of the arbuscular mycorrhizal fungus infection and colonization processes in roots. Transcription factor involved in the positive regulation of the beta-carotene isomerase D27, which participates in a pathway leading to biosynthesis of strigolactones in roots. The polypeptide is Protein NODULATION SIGNALING PATHWAY 2 (Lotus japonicus (Lotus corniculatus var. japonicus)).